The primary structure comprises 151 residues: MAKRVQLALTESIASLGKEGDLVEVAPGYARNFLLPYGKAMNVTPAVLKQIERKKEKEKIAADKLKQEALDFQTALSTIGRFTIKKQVGEDGVLFGTVTNGDVAEAIEEATKKEIDRRNITVPDIHNLGSFTAKIKLHPEVNAEVNIEVTS.

Belongs to the bacterial ribosomal protein bL9 family.

Its function is as follows. Binds to the 23S rRNA. The chain is Large ribosomal subunit protein bL9 from Prochlorococcus marinus (strain MIT 9215).